The primary structure comprises 225 residues: Leucyl/phenylalanyl-tRNA--protein transferase (225 aa).

Belongs to the L/F-transferase family.

Its subcellular location is the cytoplasm. It catalyses the reaction N-terminal L-lysyl-[protein] + L-leucyl-tRNA(Leu) = N-terminal L-leucyl-L-lysyl-[protein] + tRNA(Leu) + H(+). It carries out the reaction N-terminal L-arginyl-[protein] + L-leucyl-tRNA(Leu) = N-terminal L-leucyl-L-arginyl-[protein] + tRNA(Leu) + H(+). The catalysed reaction is L-phenylalanyl-tRNA(Phe) + an N-terminal L-alpha-aminoacyl-[protein] = an N-terminal L-phenylalanyl-L-alpha-aminoacyl-[protein] + tRNA(Phe). Functions in the N-end rule pathway of protein degradation where it conjugates Leu, Phe and, less efficiently, Met from aminoacyl-tRNAs to the N-termini of proteins containing an N-terminal arginine or lysine. This chain is Leucyl/phenylalanyl-tRNA--protein transferase, found in Gluconobacter oxydans (strain 621H) (Gluconobacter suboxydans).